We begin with the raw amino-acid sequence, 143 residues long: Large ribosomal subunit protein uL13 (143 aa).

This sequence belongs to the universal ribosomal protein uL13 family. In terms of assembly, part of the 50S ribosomal subunit.

In terms of biological role, this protein is one of the early assembly proteins of the 50S ribosomal subunit, although it is not seen to bind rRNA by itself. It is important during the early stages of 50S assembly. The sequence is that of Large ribosomal subunit protein uL13 from Desulfitobacterium hafniense (strain Y51).